The chain runs to 501 residues: Acetylcholine receptor subunit beta (501 aa).

An N-terminal signal peptide occupies residues 1 to 23; that stretch reads MALGALLLLLGVLGTPLAPGARG. Residues 24-244 lie on the Extracellular side of the membrane; it reads SEAEGQLIKK…VIFYLIIRRK (221 aa). Cysteine 151 and cysteine 165 form a disulfide bridge. N-linked (GlcNAc...) asparagine glycosylation is present at asparagine 164. 3 helical membrane passes run 245–269, 277–295, and 311–332; these read PLFY…VFYL, MGLS…LLLA, and YLMF…VLNL. The Cytoplasmic portion of the chain corresponds to 333 to 469; that stretch reads HHRSPHTHQM…WQFVAMVVDR (137 aa). The interval 362 to 382 is disordered; the sequence is RPKPERDQLPEPHHSLSPRSG. The span at 363-375 shows a compositional bias: basic and acidic residues; the sequence is PKPERDQLPEPHH. A Phosphotyrosine; by Tyr-kinases modification is found at tyrosine 390. A helical membrane pass occupies residues 470–488; that stretch reads LFLWTFIVFTSVGTLVIFL.

This sequence belongs to the ligand-gated ion channel (TC 1.A.9) family. Acetylcholine receptor (TC 1.A.9.1) subfamily. Beta-1/CHRNB1 sub-subfamily. Pentamer of two alpha chains, and one each of the beta, delta, and gamma (in immature muscle) or epsilon (in mature muscle) chains. The muscle heteropentamer composed of alpha-1, beta-1, delta, epsilon subunits interacts with the alpha-conotoxin ImII.

The protein localises to the postsynaptic cell membrane. It is found in the cell membrane. It catalyses the reaction K(+)(in) = K(+)(out). It carries out the reaction Na(+)(in) = Na(+)(out). In terms of biological role, after binding acetylcholine, the AChR responds by an extensive change in conformation that affects all subunits and leads to opening of an ion-conducting channel across the plasma membrane. The sequence is that of Acetylcholine receptor subunit beta (Chrnb1) from Mus musculus (Mouse).